Here is a 183-residue protein sequence, read N- to C-terminus: Ribosome-recycling factor (183 aa).

It belongs to the RRF family.

The protein localises to the cytoplasm. In terms of biological role, responsible for the release of ribosomes from messenger RNA at the termination of protein biosynthesis. May increase the efficiency of translation by recycling ribosomes from one round of translation to another. This is Ribosome-recycling factor from Mycoplasmoides gallisepticum (strain R(low / passage 15 / clone 2)) (Mycoplasma gallisepticum).